Here is a 540-residue protein sequence, read N- to C-terminus: MTRPRPVVLIIMDGWGIAPPGPGNAADLADTPHVDAWMANCPFTTLGASGLDVGLPEGQIGNSEVGHLNIGAGFVVYQELTRISKAIADGDFFTNPVLLQAIEHVKQRNSALHLMGLFGPGGVHAHEDHLHALLELAHRHHLQRVYLHLFLDGRDVLPRSALGFLDTLEGVIARLGVGTIATVSGRYYAMDRDKRWERTGRAYAALVDGVGEKAPSARAAIEASYARDVSDEFVLPTVIVTASGEPTATVRDGDAVIFTNFRPDRGRQLTRAFVDPDLNERIRQHYERQKAEGQPLPATIWQRERQLRDLCFVTMTQYEEGLPVLVAFPPRYVTNPLAAVISQAGLRQFHIAETEKYPHVTFFLNGGREEPFPGEDRQLIPSPKVATYDLKPEMSAPEVTEALLAAIDSDQYDFIVVNYANPDMVGHTGSIPAVIKACEAVDAGLARVVPAILERGGVALVIADHGNAEQMIDPETGGPHTAHTTNPAPCFLIGGAGYGKDAIELRHGGRLADVAPTLLELLELEPSPDMTGQSLIVRRA.

Mn(2+) contacts are provided by Asp-13 and Ser-63. The active-site Phosphoserine intermediate is Ser-63. Substrate-binding positions include His-124, 154-155 (RD), Arg-186, Arg-192, 262-265 (RPDR), and Lys-356. Mn(2+) contacts are provided by Asp-423, His-427, Asp-464, His-465, and His-483.

This sequence belongs to the BPG-independent phosphoglycerate mutase family. Monomer. Mn(2+) serves as cofactor.

It carries out the reaction (2R)-2-phosphoglycerate = (2R)-3-phosphoglycerate. The protein operates within carbohydrate degradation; glycolysis; pyruvate from D-glyceraldehyde 3-phosphate: step 3/5. Its function is as follows. Catalyzes the interconversion of 2-phosphoglycerate and 3-phosphoglycerate. In Chloroflexus aurantiacus (strain ATCC 29366 / DSM 635 / J-10-fl), this protein is 2,3-bisphosphoglycerate-independent phosphoglycerate mutase.